The chain runs to 476 residues: Neuropeptide receptor 18 (476 aa).

Residues 1–61 (MSSFYNEAKF…LSNHDNSSLM (61 aa)) lie on the Extracellular side of the membrane. Residues N43 and N57 are each glycosylated (N-linked (GlcNAc...) asparagine). A helical transmembrane segment spans residues 62 to 82 (LIAGFYALLFMFGTCGNAAIL). Residues 83–102 (AVVHHVKGQDPRSRHNTTLT) lie on the Cytoplasmic side of the membrane. The chain crosses the membrane as a helical span at residues 103-123 (YICILSIVDFLSMLPIPMTII). Over 124 to 139 (DQILGFWMFDTFACKL) the chain is Extracellular. C137 and C228 form a disulfide bridge. Residues 140–160 (FRLLEHIGKIFSTFILVAFSI) traverse the membrane as a helical segment. Residues 161 to 179 (DRYCAVCHPLQVRVRNQRT) are Cytoplasmic-facing. A helical membrane pass occupies residues 180–200 (VFVFLGIMFFVTCVMLSPILL). At 201–236 (YAHSKELVMHEKVDLDQEVITRMHLYKCVDDLGREL) the chain is on the extracellular side. Residues 237–257 (FVVFTLYSFVLAYLMPLLFMI) traverse the membrane as a helical segment. The Cytoplasmic segment spans residues 258–291 (YFYYEMLIRLFKQANVIKQTLVGRRSGGEEKKLT). A helical transmembrane segment spans residues 292–312 (IPVGHIAIYTLAICSFHFICW). The Extracellular portion of the chain corresponds to 313–334 (TPYWISILYSLYEELYQDTKST). A helical membrane pass occupies residues 335–355 (ASPPTYAFIYFMYGVHALPYI). At 356–476 (NSASNFILYG…ITPDTESVIL (121 aa)) the chain is on the cytoplasmic side.

This sequence belongs to the G-protein coupled receptor 1 family. As to expression, expressed in sensory neurons including ASER.

Its subcellular location is the cell membrane. Probable receptor for neuropeptide ligand nlp-9 that plays a role in octopamine signaling and specifically, the octapamine inhibition of aversion responses in olfactory sensory neurons. In AWB olfactory sensory neurons, required for the detection of preferred food sources. This chain is Neuropeptide receptor 18, found in Caenorhabditis elegans.